Reading from the N-terminus, the 292-residue chain is 4-hydroxy-tetrahydrodipicolinate synthase (292 aa).

Thr45 provides a ligand contact to pyruvate. Catalysis depends on Tyr133, which acts as the Proton donor/acceptor. Catalysis depends on Lys162, which acts as the Schiff-base intermediate with substrate. Residue Ile204 coordinates pyruvate.

Belongs to the DapA family. In terms of assembly, homotetramer; dimer of dimers.

It is found in the cytoplasm. The enzyme catalyses L-aspartate 4-semialdehyde + pyruvate = (2S,4S)-4-hydroxy-2,3,4,5-tetrahydrodipicolinate + H2O + H(+). The protein operates within amino-acid biosynthesis; L-lysine biosynthesis via DAP pathway; (S)-tetrahydrodipicolinate from L-aspartate: step 3/4. Catalyzes the condensation of (S)-aspartate-beta-semialdehyde [(S)-ASA] and pyruvate to 4-hydroxy-tetrahydrodipicolinate (HTPA). The polypeptide is 4-hydroxy-tetrahydrodipicolinate synthase (Oleidesulfovibrio alaskensis (strain ATCC BAA-1058 / DSM 17464 / G20) (Desulfovibrio alaskensis)).